The sequence spans 268 residues: Imidazole glycerol phosphate synthase subunit HisF (268 aa).

Catalysis depends on residues aspartate 12 and aspartate 131.

Belongs to the HisA/HisF family. In terms of assembly, heterodimer of HisH and HisF.

Its subcellular location is the cytoplasm. It carries out the reaction 5-[(5-phospho-1-deoxy-D-ribulos-1-ylimino)methylamino]-1-(5-phospho-beta-D-ribosyl)imidazole-4-carboxamide + L-glutamine = D-erythro-1-(imidazol-4-yl)glycerol 3-phosphate + 5-amino-1-(5-phospho-beta-D-ribosyl)imidazole-4-carboxamide + L-glutamate + H(+). It functions in the pathway amino-acid biosynthesis; L-histidine biosynthesis; L-histidine from 5-phospho-alpha-D-ribose 1-diphosphate: step 5/9. Its function is as follows. IGPS catalyzes the conversion of PRFAR and glutamine to IGP, AICAR and glutamate. The HisF subunit catalyzes the cyclization activity that produces IGP and AICAR from PRFAR using the ammonia provided by the HisH subunit. The protein is Imidazole glycerol phosphate synthase subunit HisF of Chelativorans sp. (strain BNC1).